Reading from the N-terminus, the 397-residue chain is RNA pseudouridine synthase 5 (397 aa).

The region spanning 64–114 is the S4 RNA-binding domain; the sequence is APLPGWIKRIRDGQITVDGEVATDPDMILREGSKLVYHRLPWQEPFAPHLL.

It belongs to the pseudouridine synthase RluA family.

The enzyme catalyses a uridine in RNA = a pseudouridine in RNA. The polypeptide is RNA pseudouridine synthase 5 (Oryza sativa subsp. japonica (Rice)).